The sequence spans 102 residues: Large ribosomal subunit protein uL24 (102 aa).

The disordered stretch occupies residues 1–22 (MHVKKGDTVQVMSGKDKGKQGV).

The protein belongs to the universal ribosomal protein uL24 family. Part of the 50S ribosomal subunit.

Functionally, one of two assembly initiator proteins, it binds directly to the 5'-end of the 23S rRNA, where it nucleates assembly of the 50S subunit. One of the proteins that surrounds the polypeptide exit tunnel on the outside of the subunit. This Exiguobacterium sp. (strain ATCC BAA-1283 / AT1b) protein is Large ribosomal subunit protein uL24.